The sequence spans 294 residues: Cytidine deaminase (294 aa).

CMP/dCMP-type deaminase domains are found at residues 48-168 and 186-294; these read DEDA…FGPK and LTGD…VLLA. 89 to 91 contacts substrate; the sequence is NME. Residue histidine 102 participates in Zn(2+) binding. Catalysis depends on glutamate 104, which acts as the Proton donor. The Zn(2+) site is built by cysteine 129 and cysteine 132.

This sequence belongs to the cytidine and deoxycytidylate deaminase family. In terms of assembly, homodimer. Zn(2+) is required as a cofactor.

It carries out the reaction cytidine + H2O + H(+) = uridine + NH4(+). The enzyme catalyses 2'-deoxycytidine + H2O + H(+) = 2'-deoxyuridine + NH4(+). Functionally, this enzyme scavenges exogenous and endogenous cytidine and 2'-deoxycytidine for UMP synthesis. The polypeptide is Cytidine deaminase (Shigella dysenteriae serotype 1 (strain Sd197)).